The sequence spans 388 residues: Na(+)/H(+) antiporter NhaA (388 aa).

The Cytoplasmic portion of the chain corresponds to 1–11 (MKHLHRFFSSD). Residues 12–31 (ASGGIILIIAAILAMIMANS) traverse the membrane as a helical segment. Residues 32–58 (GATSGWYHDFLETPVQLRVGSLEINKN) lie on the Periplasmic side of the membrane. A helical membrane pass occupies residues 59–80 (MLLWINDALMAVFFLLVGLEVK). Topologically, residues 81-96 (RELMQGSLASLLQAAF) are cytoplasmic. A helical membrane pass occupies residues 97-116 (PVIAAIGGMIVPALLYLAFN). Over 117–122 (YADPIT) the chain is Periplasmic. The helical transmembrane segment at 123–130 (REGWAIPA) threads the bilayer. Residues 131-154 (ATDIAFALGVLALLGSRVPLVLKI) are Cytoplasmic-facing. A helical membrane pass occupies residues 155–176 (FLMALAIIDDLGAIIIIALFYT). Residues 177–180 (NDLS) are Periplasmic-facing. Residues 181-200 (MASLGVAAVAIAVLAVLNLC) form a helical membrane-spanning segment. Residues 201–204 (GVRR) lie on the Cytoplasmic side of the membrane. Residues 205 to 222 (TGVYILVGVVLWTAVLKS) traverse the membrane as a helical segment. A topological domain (periplasmic) is located at residue Gly223. The helical transmembrane segment at 224 to 236 (VHATLAGVIVGFF) threads the bilayer. Topologically, residues 237–253 (IPLKEKHGRSPAKRLEH) are cytoplasmic. Residues 254–272 (VLHPWVAYLILPLFAFANA) traverse the membrane as a helical segment. Over 273-286 (GVSLQGVTLDGLTS) the chain is Periplasmic. The helical transmembrane segment at 287 to 310 (ILPLGIIAGLLIGKPLGISLFCWL) threads the bilayer. The Cytoplasmic segment spans residues 311-339 (ALRLKLAHLPEGTTYQQIMVVGILCGIGF). The helical transmembrane segment at 340–350 (TMSIFIASLAF) threads the bilayer. Topologically, residues 351 to 357 (GSVDPEL) are periplasmic. Residues 358–380 (INWAKLGILVGSISSAVIGYSWL) form a helical membrane-spanning segment. Topologically, residues 381–388 (RVRLRPSV) are cytoplasmic.

This sequence belongs to the NhaA Na(+)/H(+) (TC 2.A.33) antiporter family.

It localises to the cell inner membrane. The enzyme catalyses Na(+)(in) + 2 H(+)(out) = Na(+)(out) + 2 H(+)(in). Na(+)/H(+) antiporter that extrudes sodium in exchange for external protons. The protein is Na(+)/H(+) antiporter NhaA of Shigella flexneri serotype 5b (strain 8401).